A 138-amino-acid chain; its full sequence is Large ribosomal subunit protein bL17 (138 aa).

This sequence belongs to the bacterial ribosomal protein bL17 family. Part of the 50S ribosomal subunit. Contacts protein L32.

This chain is Large ribosomal subunit protein bL17, found in Solidesulfovibrio magneticus (strain ATCC 700980 / DSM 13731 / RS-1) (Desulfovibrio magneticus).